Here is a 542-residue protein sequence, read N- to C-terminus: Chaperonin GroEL (542 aa).

ATP-binding positions include 30-33 (TLGP), Lys-51, 87-91 (DGTTT), Gly-415, 480-482 (NAA), and Asp-496.

It belongs to the chaperonin (HSP60) family. Forms a cylinder of 14 subunits composed of two heptameric rings stacked back-to-back. Interacts with the co-chaperonin GroES.

The protein resides in the cytoplasm. It catalyses the reaction ATP + H2O + a folded polypeptide = ADP + phosphate + an unfolded polypeptide.. In terms of biological role, together with its co-chaperonin GroES, plays an essential role in assisting protein folding. The GroEL-GroES system forms a nano-cage that allows encapsulation of the non-native substrate proteins and provides a physical environment optimized to promote and accelerate protein folding. In Tremblaya princeps, this protein is Chaperonin GroEL.